A 66-amino-acid chain; its full sequence is Large ribosomal subunit protein bL35 (66 aa).

The protein belongs to the bacterial ribosomal protein bL35 family.

The sequence is that of Large ribosomal subunit protein bL35 from Synechococcus sp. (strain JA-2-3B'a(2-13)) (Cyanobacteria bacterium Yellowstone B-Prime).